Reading from the N-terminus, the 147-residue chain is MNNILVINGPNLNLLGKREPDIYGNITLENINQKIKLHFKNEDLKIDFFQSNEEGKIIDKIIESEKKYNAIVINPAAYSHYSIAILDAMRSINIPVVEVHLSNIYKREEYRKKSVTAEASLGVISGFGYYGYIMAIEFILNNLVREK.

The Proton acceptor role is filled by Tyr-23. The substrate site is built by Asn-74, His-80, and Asp-87. His-100 (proton donor) is an active-site residue. Residues 101-102 (LS) and Arg-111 each bind substrate.

Belongs to the type-II 3-dehydroquinase family. In terms of assembly, homododecamer.

It catalyses the reaction 3-dehydroquinate = 3-dehydroshikimate + H2O. It participates in metabolic intermediate biosynthesis; chorismate biosynthesis; chorismate from D-erythrose 4-phosphate and phosphoenolpyruvate: step 3/7. Catalyzes a trans-dehydration via an enolate intermediate. The sequence is that of 3-dehydroquinate dehydratase from Clostridium botulinum (strain Kyoto / Type A2).